The primary structure comprises 344 residues: MKLAILGAGCYRTHAASGITNFSRACEVAEMVGKPEIAMTHSTITMGAELKELAGVDEVVVADPVFDNQFTVIDDFAYEDVIEAHKEDPEKIMPQIREKVNEVAKELPKPPEGAIHFTHPEDLGFEITTDDREAVADADFIMTWFPKGDMQPDIINKFIDDIKPGAIVTHACTIPTTKFYKIFEQKHGDLVTKPETLNVTSYHPGAVPEMKGQVYIAEGYASEDAIETLFELGQKARGNAYRLPAELLGPVCDMCSALTAITYAGILSYRDSVTQVLGAPASFAQMMAKESLEQITALMEKVGIDKMEENLDPGALLGTADSMNFGASAEILPTVFEILEKRKK.

It belongs to the HMD family. Homotetramer.

It carries out the reaction 5,10-methenyl-5,6,7,8-tetrahydromethanopterin + H2 = 5,10-methylenetetrahydromethanopterin + H(+). It participates in one-carbon metabolism; methanogenesis from CO(2); 5,10-methylene-5,6,7,8-tetrahydromethanopterin from 5,10-methenyl-5,6,7,8-tetrahydromethanopterin (hydrogen route): step 1/1. With respect to regulation, activity requires salt; 100 mM sodium or potassium salts of chloride, phosphate or sulfate are equally effective. Inactivated by O(2). In terms of biological role, catalyzes the reversible reduction of methenyl-H(4)MPT(+) to methylene-H(4)MPT. This chain is 5,10-methenyltetrahydromethanopterin hydrogenase, found in Methanothermobacter marburgensis (strain ATCC BAA-927 / DSM 2133 / JCM 14651 / NBRC 100331 / OCM 82 / Marburg) (Methanobacterium thermoautotrophicum).